Reading from the N-terminus, the 190-residue chain is Potassium-transporting ATPase KdpC subunit (190 aa).

A helical transmembrane segment spans residues 9 to 29; it reads VMFILFTIICGGIYPSVVTGI.

Belongs to the KdpC family. In terms of assembly, the system is composed of three essential subunits: KdpA, KdpB and KdpC.

It localises to the cell inner membrane. Its function is as follows. Part of the high-affinity ATP-driven potassium transport (or Kdp) system, which catalyzes the hydrolysis of ATP coupled with the electrogenic transport of potassium into the cytoplasm. This subunit acts as a catalytic chaperone that increases the ATP-binding affinity of the ATP-hydrolyzing subunit KdpB by the formation of a transient KdpB/KdpC/ATP ternary complex. The sequence is that of Potassium-transporting ATPase KdpC subunit from Citrifermentans bemidjiense (strain ATCC BAA-1014 / DSM 16622 / JCM 12645 / Bem) (Geobacter bemidjiensis).